A 235-amino-acid polypeptide reads, in one-letter code: Uridylate kinase (235 aa).

9–12 lines the ATP pocket; that stretch reads KISG. UMP is bound at residue G50. Residues G51 and R55 each contribute to the ATP site. UMP contacts are provided by residues D70 and 131–138; that span reads TGFPYFTT. Residues N159, Y165, and D168 each contribute to the ATP site.

It belongs to the UMP kinase family. Homohexamer; trimer of dimers.

The protein localises to the cytoplasm. The catalysed reaction is UMP + ATP = UDP + ADP. Its pathway is pyrimidine metabolism; CTP biosynthesis via de novo pathway; UDP from UMP (UMPK route): step 1/1. With respect to regulation, unlike other bacteria, is not activated by GTP. UTP is a competitive inhibitor against UMP and a non-competitive inhibitor toward ATP. Its function is as follows. Catalyzes the reversible phosphorylation of UMP to UDP, with ATP as the most efficient phosphate donor. Is also able to phosphorylate dUMP. This is Uridylate kinase (pyrH) from Ureaplasma parvum serovar 3 (strain ATCC 700970).